The chain runs to 400 residues: Phosphoglycerate kinase (400 aa).

Residues 24–26 (DFN), Arg40, 63–66 (HFGR), Arg121, and Arg154 contribute to the substrate site. ATP is bound by residues Lys205, Gly296, Glu327, and 356 to 359 (GGDS).

The protein belongs to the phosphoglycerate kinase family. Monomer.

The protein resides in the cytoplasm. It catalyses the reaction (2R)-3-phosphoglycerate + ATP = (2R)-3-phospho-glyceroyl phosphate + ADP. It functions in the pathway carbohydrate degradation; glycolysis; pyruvate from D-glyceraldehyde 3-phosphate: step 2/5. The chain is Phosphoglycerate kinase from Nostoc punctiforme (strain ATCC 29133 / PCC 73102).